A 182-amino-acid polypeptide reads, in one-letter code: MGLLSILRKLKSAPDQEVRILLLGLDNAGKTTLLKQLASEDISHITPTQGFNIKSVQSQGFKLNVWDIGGQRKIRPYWRNYFENTDILIYVIDSADRKRFEETGQELAELLEEEKLSCVPVLIFANKQDLLTAAPASEIAEGLNLHTIRDRFWQIQSCSALTGEGVQDGMNWVCKNVSAKKK.

G2 carries N-myristoyl glycine lipidation. Phosphoserine is present on S5. Residues 24-31, T48, 67-71, G70, 126-129, and 159-161 each bind GTP; these read GLDNAGKT, DIGGQ, NKQD, and SAL. Positions 31 and 48 each coordinate Mg(2+).

Belongs to the small GTPase superfamily. Arf family. Found in a complex with ARL3, RP2 and UNC119 (or UNC119B); RP2 induces hydrolysis of GTP ARL3 in the complex, leading to the release of UNC119 (or UNC119B). Interacts with RP2; interaction is direct and stimulated with the activated GTP-bound form of ARL3. Interacts with SYS1. Interacts with ARL2BP; the GTP-bound form interacts with ARL2BP. Microtubule-associated protein. Does not interact with TBCC. Interacts with RP2. Interacts with PDE6D; the interaction occurs specifically with the GTP-bound form of ARL3. Interacts with GGA1; the interaction recruits PKD1:PKD2 complex to trans-Golgi network and is required for ciliary targeting of PKD1:PKD2 complex. Interacts with DNAAF9.

The protein localises to the golgi apparatus membrane. It localises to the cytoplasm. The protein resides in the cytoskeleton. Its subcellular location is the spindle. It is found in the nucleus. The protein localises to the microtubule organizing center. It localises to the centrosome. The protein resides in the cell projection. Its subcellular location is the cilium. In terms of biological role, small GTP-binding protein which cycles between an inactive GDP-bound and an active GTP-bound form, and the rate of cycling is regulated by guanine nucleotide exchange factors (GEF) and GTPase-activating proteins (GAP). Required for normal cytokinesis and cilia signaling. Requires assistance from GTPase-activating proteins (GAPs) like RP2 and PDE6D, in order to cycle between inactive GDP-bound and active GTP-bound forms. Required for targeting proteins to the cilium, including myristoylated NPHP3 and prenylated INPP5E. Targets NPHP3 to the ciliary membrane by releasing myristoylated NPHP3 from UNC119B cargo adapter into the cilium. Required for PKD1:PKD2 complex targeting from the trans-Golgi network to the cilium. This is ADP-ribosylation factor-like protein 3 (ARL3) from Bos taurus (Bovine).